Here is a 342-residue protein sequence, read N- to C-terminus: Ribosomal RNA small subunit methyltransferase C (342 aa).

It belongs to the methyltransferase superfamily. RsmC family. As to quaternary structure, monomer.

The protein resides in the cytoplasm. The enzyme catalyses guanosine(1207) in 16S rRNA + S-adenosyl-L-methionine = N(2)-methylguanosine(1207) in 16S rRNA + S-adenosyl-L-homocysteine + H(+). Its function is as follows. Specifically methylates the guanine in position 1207 of 16S rRNA in the 30S particle. The sequence is that of Ribosomal RNA small subunit methyltransferase C from Shewanella piezotolerans (strain WP3 / JCM 13877).